The primary structure comprises 592 residues: Frizzled-1 (592 aa).

The disordered stretch occupies residues 1-26 (MAERRGPAGGGSGEVGGGRRAGGDRC). Positions 1–48 (MAERRGPAGGGSGEVGGGRRAGGDRCPRRPPALPLLLLLWAAALPAGG) are cleaved as a signal peptide. Gly residues predominate over residues 7 to 20 (PAGGGSGEVGGGRR). Topologically, residues 49–271 (QPAAQPAALS…PEELRFSRTW (223 aa)) are extracellular. The FZ domain maps to 65-184 (PDHGYCQPIS…HGAGELCVGQ (120 aa)). Cystine bridges form between Cys70/Cys131, Cys78/Cys124, Cys115/Cys152, Cys141/Cys181, and Cys145/Cys169. The N-linked (GlcNAc...) asparagine glycan is linked to Asn84. Asn185 carries N-linked (GlcNAc...) asparagine glycosylation. Residues 185 to 219 (NASERGTPTPALRPESWTSNPHRGGGAGGSGPGEA) form a disordered region. Positions 207–218 (RGGGAGGSGPGE) are enriched in gly residues. The chain crosses the membrane as a helical span at residues 272 to 292 (IGIWSVLCCASTLFTVLTYLV). Topologically, residues 293–303 (DMKRFSYPERP) are cytoplasmic. Residues 304–324 (IIFLSGCYTAVAVAYIAGFLL) form a helical membrane-spanning segment. The Extracellular portion of the chain corresponds to 325–351 (EERVVCNERFAEDGSRTVAQGTKREGC). Residues 352-372 (TILFMMLYFFGMASSIWWVIL) form a helical membrane-spanning segment. Over 373-394 (SLTWFLAAGMKWGHEAIEANSQ) the chain is Cytoplasmic. The helical transmembrane segment at 395–415 (YFHLAAWAVPAIKTITILALG) threads the bilayer. Residues 416-438 (QVDGDVLSGVCFVGINNVDALRG) are Extracellular-facing. Residues 439 to 459 (FVLAPLFVYLFIGTSFLLAGF) form a helical membrane-spanning segment. Residues 460 to 485 (VSLFRIRTIMKHDGTKTEKLEKLMVR) lie on the Cytoplasmic side of the membrane. A helical transmembrane segment spans residues 486 to 506 (IGIFSVLYTVPATIVIACYFY). Over 507–546 (EQAFREQWERSWVTQSCKSYAIPCPNNHSSHHPPMSPDFT) the chain is Extracellular. The N-linked (GlcNAc...) asparagine glycan is linked to Asn533. The chain crosses the membrane as a helical span at residues 547–567 (VFMIKYLMTLIVGITSGFWIW). Topologically, residues 568–592 (SGKTLNSWRKFYTRLTNSKQGETTV) are cytoplasmic. The Lys-Thr-X-X-X-Trp motif, mediates interaction with the PDZ domain of Dvl family members motif lies at 570 to 575 (KTLNSW). Residues 590–592 (TTV) carry the PDZ-binding motif.

It belongs to the G-protein coupled receptor Fz/Smo family. In terms of tissue distribution, expressed in the lens, otic placode (medial wall of the vesicle) and in epibranchial placode. Also expressed in the developing somites (dermomyotome).

It is found in the cell membrane. In terms of biological role, receptor for Wnt proteins. Functions in the canonical Wnt/beta-catenin signaling pathway. The canonical Wnt/beta-catenin signaling pathway leads to the activation of disheveled proteins, inhibition of GSK-3 kinase, nuclear accumulation of beta-catenin and activation of Wnt target genes. A second signaling pathway involving PKC and calcium fluxes has been seen for some family members, but it is not yet clear if it represents a distinct pathway or if it can be integrated in the canonical pathway, as PKC seems to be required for Wnt-mediated inactivation of GSK-3 kinase. Both pathways seem to involve interactions with G-proteins. May be involved in transduction and intercellular transmission of polarity information during tissue morphogenesis and/or in differentiated tissues. This Gallus gallus (Chicken) protein is Frizzled-1 (FZD1).